The following is a 900-amino-acid chain: Iodate reductase subunit IdrA (900 aa).

Positions methionine 1 to valine 21 are disordered. [3Fe-4S] cluster-binding residues include cysteine 35, cysteine 38, and cysteine 42.

The protein belongs to the prokaryotic molybdopterin-containing oxidoreductase family. The iodate reductase (Idr) complex is composed of a molybdopterin-dependent iodate reductase (IdrA and IdrB subunits) and two associated peroxidases (IdrP1 and IdrP2). [3Fe-4S] cluster is required as a cofactor. The cofactor is Mo-bis(molybdopterin guanine dinucleotide).

It is found in the periplasm. Its function is as follows. Involved in iodate respiration. May accept electrons from cytochrome c551, and catalyze the reduction of iodate (IO(3)(-)) to produce the chemically unstable intermediate hypoiodous acid (HIO). This intermediate then undergoes abiotic disproportionation to yield two molecules of iodide (I(-)) and one molecule of iodate. The resultant iodate subsequently cycles back into the reductive pathway. The initial reduction of iodate may inadvertently produce low levels of incidental toxic H(2)O(2), which is detoxified by IdrP1 and IdrP2. In Denitromonas iodatirespirans, this protein is Iodate reductase subunit IdrA.